Consider the following 352-residue polypeptide: Quinolinate synthase (352 aa).

The iminosuccinate site is built by H48 and S69. [4Fe-4S] cluster is bound at residue C114. Iminosuccinate contacts are provided by residues 140 to 142 and S157; that span reads YAN. Position 201 (C201) interacts with [4Fe-4S] cluster. Iminosuccinate contacts are provided by residues 227–229 and T244; that span reads HPE. C298 is a binding site for [4Fe-4S] cluster.

This sequence belongs to the quinolinate synthase family. Type 1 subfamily. [4Fe-4S] cluster serves as cofactor.

Its subcellular location is the cytoplasm. The enzyme catalyses iminosuccinate + dihydroxyacetone phosphate = quinolinate + phosphate + 2 H2O + H(+). The protein operates within cofactor biosynthesis; NAD(+) biosynthesis; quinolinate from iminoaspartate: step 1/1. Its function is as follows. Catalyzes the condensation of iminoaspartate with dihydroxyacetone phosphate to form quinolinate. This chain is Quinolinate synthase, found in Pseudomonas fluorescens (strain Pf0-1).